The primary structure comprises 129 residues: C-phycocyanin beta subunit (129 aa).

N62 carries the N4-methylasparagine modification. Position 116 (C116) interacts with (2R,3E)-phycocyanobilin.

It belongs to the phycobiliprotein family. In terms of assembly, heterodimer of an alpha and a beta subunit, which further assembles into trimers and the trimers into hexamers. Post-translationally, two isomers exist. Contains two covalently linked bilin chromophores.

The protein resides in the cellular thylakoid membrane. Its function is as follows. Light-harvesting photosynthetic bile pigment-protein from the phycobiliprotein complex (phycobilisome, PBS). Phycocyanin is the major phycobiliprotein in the PBS rod. This chain is C-phycocyanin beta subunit, found in Aphanizomenon flos-aquae.